We begin with the raw amino-acid sequence, 904 residues long: E3 ubiquitin-protein ligase ZNF598 (904 aa).

An RING-type zinc finger spans residues 29 to 69 (CVLCCGDLEATALGRCDHPVCYRCSTKMRVLCEQRYCAVCR). A C2H2-type zinc finger spans residues 187 to 210 (PLCKFCDERYLDNDELLKHLRRDH). A Phosphotyrosine modification is found at Tyr306. 2 disordered regions span residues 312–469 (YSRQ…GLAL) and 490–656 (VSSV…LPRP). Positions 346-358 (AAAVRASVAAQQQ) are enriched in low complexity. The segment covering 359 to 388 (EEARRSEDQEEGGRPKKEEAAARGPEDPRG) has biased composition (basic and acidic residues). Positions 404 to 416 (ETSTNGPVSQEAF) are enriched in polar residues. Low complexity predominate over residues 418–431 (VTGPAAPGCVGVPG). A phosphoserine mark is found at Gly428, Gly431, and Ser437. Composition is skewed to low complexity over residues 447-461 (SLSA…TAAT) and 502-513 (SLVSAWNSSSSS). Residues 521–531 (LSAQATGSGQP) are compositionally biased toward polar residues. Residues 534-543 (KAGKGSRGGR) are compositionally biased toward basic residues. The span at 564-584 (LLSTRPTGSVSSTLGLASIQP) shows a compositional bias: polar residues.

The protein belongs to the ZNF598/HEL2 family. Interacts with the E2 ubiquitin-conjugating enzyme UBE2D3. Component of the 4EHP-GYF2 complex, at least composed of EIF4E2, GIGYF2 and ZNF598.

Its subcellular location is the cytoplasm. The protein resides in the cytosol. The catalysed reaction is S-ubiquitinyl-[E2 ubiquitin-conjugating enzyme]-L-cysteine + [acceptor protein]-L-lysine = [E2 ubiquitin-conjugating enzyme]-L-cysteine + N(6)-ubiquitinyl-[acceptor protein]-L-lysine.. Its pathway is protein modification; protein ubiquitination. E3 ubiquitin-protein ligase that plays a key role in the ribosome quality control (RQC), a pathway that takes place when a ribosome has stalled during translation, leading to degradation of nascent peptide chains. ZNF598 is activated when ribosomes are stalled within an mRNA following translation of prematurely polyadenylated mRNAs. Acts as a ribosome collision sensor: specifically recognizes and binds collided di-ribosome, which arises when a trailing ribosome encounters a slower leading ribosome, leading to terminally arrest translation. Following binding to colliding ribosomes, mediates monoubiquitination of 40S ribosomal proteins RPS10/eS10 and RPS3/uS3, and 'Lys-63'-linked polyubiquitination of RPS20/uS10. Polyubiquitination of RPS20/uS10 promotes recruitment of the RQT (ribosome quality control trigger) complex, which drives the disassembly of stalled ribosomes, followed by degradation of nascent peptides. E3 ubiquitin-protein ligase activity is dependent on the E2 ubiquitin-conjugating enzyme UBE2D3. Also acts as an adapter that recruits the 4EHP-GYF2 complex to mRNAs. Independently of its role in RQC, may also act as a negative regulator of interferon-stimulated gene (ISG) expression. Its function is as follows. (Microbial infection) Required for poxvirus protein synthesis by mediating ubiquitination of RPS10/eS10 and RPS20/uS10. Poxvirus encoding mRNAs contain unusual 5' poly(A) leaders and ZNF598 is required for their translational efficiency, possibly via its ability to suppress readthrough or sliding on shorter poly(A) tracts. The polypeptide is E3 ubiquitin-protein ligase ZNF598 (Homo sapiens (Human)).